The following is a 468-amino-acid chain: 6-phosphogluconate dehydrogenase, decarboxylating (468 aa).

NADP(+) is bound by residues 10–15 (GMAVMG), 33–35 (NRS), 74–76 (VKA), and N102. Residues N102 and 128–130 (SGG) each bind substrate. The active-site Proton acceptor is the K183. 186-187 (HN) serves as a coordination point for substrate. E190 acts as the Proton donor in catalysis. Y191, K260, R287, R445, and H451 together coordinate substrate.

It belongs to the 6-phosphogluconate dehydrogenase family. As to quaternary structure, homodimer.

The catalysed reaction is 6-phospho-D-gluconate + NADP(+) = D-ribulose 5-phosphate + CO2 + NADPH. It participates in carbohydrate degradation; pentose phosphate pathway; D-ribulose 5-phosphate from D-glucose 6-phosphate (oxidative stage): step 3/3. Its function is as follows. Catalyzes the oxidative decarboxylation of 6-phosphogluconate to ribulose 5-phosphate and CO(2), with concomitant reduction of NADP to NADPH. In Klebsiella pneumoniae, this protein is 6-phosphogluconate dehydrogenase, decarboxylating (gnd).